Here is a 387-residue protein sequence, read N- to C-terminus: 1-deoxy-D-xylulose 5-phosphate reductoisomerase (387 aa).

NADPH contacts are provided by Thr10, Gly11, Ser12, Ile13, Gly36, Asn38, and Asn122. Lys123 contacts 1-deoxy-D-xylulose 5-phosphate. Glu124 provides a ligand contact to NADPH. Residue Asp148 coordinates Mn(2+). Residues Ser149, Glu150, Ser174, and His197 each coordinate 1-deoxy-D-xylulose 5-phosphate. Position 150 (Glu150) interacts with Mn(2+). Gly203 contacts NADPH. The 1-deoxy-D-xylulose 5-phosphate site is built by Ser210, Asn215, Lys216, and Glu219. Glu219 serves as a coordination point for Mn(2+).

It belongs to the DXR family. The cofactor is Mg(2+). It depends on Mn(2+) as a cofactor.

The enzyme catalyses 2-C-methyl-D-erythritol 4-phosphate + NADP(+) = 1-deoxy-D-xylulose 5-phosphate + NADPH + H(+). It participates in isoprenoid biosynthesis; isopentenyl diphosphate biosynthesis via DXP pathway; isopentenyl diphosphate from 1-deoxy-D-xylulose 5-phosphate: step 1/6. Its function is as follows. Catalyzes the NADPH-dependent rearrangement and reduction of 1-deoxy-D-xylulose-5-phosphate (DXP) to 2-C-methyl-D-erythritol 4-phosphate (MEP). This Chloroherpeton thalassium (strain ATCC 35110 / GB-78) protein is 1-deoxy-D-xylulose 5-phosphate reductoisomerase.